Reading from the N-terminus, the 38-residue chain is Photosystem II reaction center protein L (38 aa).

The helical transmembrane segment at 17 to 37 (GLYWGLLLIFVLAVLFSSYFF) threads the bilayer.

Belongs to the PsbL family. In terms of assembly, PSII is composed of 1 copy each of membrane proteins PsbA, PsbB, PsbC, PsbD, PsbE, PsbF, PsbH, PsbI, PsbJ, PsbK, PsbL, PsbM, PsbT, PsbX, PsbY, PsbZ, Psb30/Ycf12, at least 3 peripheral proteins of the oxygen-evolving complex and a large number of cofactors. It forms dimeric complexes.

It localises to the plastid. Its subcellular location is the chloroplast thylakoid membrane. One of the components of the core complex of photosystem II (PSII). PSII is a light-driven water:plastoquinone oxidoreductase that uses light energy to abstract electrons from H(2)O, generating O(2) and a proton gradient subsequently used for ATP formation. It consists of a core antenna complex that captures photons, and an electron transfer chain that converts photonic excitation into a charge separation. This subunit is found at the monomer-monomer interface and is required for correct PSII assembly and/or dimerization. This chain is Photosystem II reaction center protein L, found in Staurastrum punctulatum (Green alga).